Consider the following 39-residue polypeptide: Photosystem II reaction center protein J (39 aa).

Residues 7 to 27 (IPLWLIGTIVGILVIGLIGIY) form a helical membrane-spanning segment.

The protein belongs to the PsbJ family. PSII is composed of 1 copy each of membrane proteins PsbA, PsbB, PsbC, PsbD, PsbE, PsbF, PsbH, PsbI, PsbJ, PsbK, PsbL, PsbM, PsbT, PsbX, PsbY, PsbZ, Psb30/Ycf12, at least 3 peripheral proteins of the oxygen-evolving complex and a large number of cofactors. It forms dimeric complexes.

Its subcellular location is the plastid. The protein localises to the chloroplast thylakoid membrane. Its function is as follows. One of the components of the core complex of photosystem II (PSII). PSII is a light-driven water:plastoquinone oxidoreductase that uses light energy to abstract electrons from H(2)O, generating O(2) and a proton gradient subsequently used for ATP formation. It consists of a core antenna complex that captures photons, and an electron transfer chain that converts photonic excitation into a charge separation. The chain is Photosystem II reaction center protein J from Welwitschia mirabilis (Tree tumbo).